The following is a 198-amino-acid chain: ATP-dependent Clp protease proteolytic subunit 1 (198 aa).

Ser-96 (nucleophile) is an active-site residue. Residue His-121 is part of the active site.

It belongs to the peptidase S14 family. Fourteen ClpP subunits assemble into 2 heptameric rings which stack back to back to give a disk-like structure with a central cavity, resembling the structure of eukaryotic proteasomes.

It is found in the cytoplasm. The enzyme catalyses Hydrolysis of proteins to small peptides in the presence of ATP and magnesium. alpha-casein is the usual test substrate. In the absence of ATP, only oligopeptides shorter than five residues are hydrolyzed (such as succinyl-Leu-Tyr-|-NHMec, and Leu-Tyr-Leu-|-Tyr-Trp, in which cleavage of the -Tyr-|-Leu- and -Tyr-|-Trp bonds also occurs).. Cleaves peptides in various proteins in a process that requires ATP hydrolysis. Has a chymotrypsin-like activity. Plays a major role in the degradation of misfolded proteins. The chain is ATP-dependent Clp protease proteolytic subunit 1 from Synechocystis sp. (strain ATCC 27184 / PCC 6803 / Kazusa).